A 352-amino-acid polypeptide reads, in one-letter code: Biotin synthase (352 aa).

The 219-residue stretch at asparagine 44 to lysine 262 folds into the Radical SAM core domain. [4Fe-4S] cluster-binding residues include cysteine 59, cysteine 63, and cysteine 66. [2Fe-2S] cluster-binding residues include cysteine 103, cysteine 134, cysteine 194, and arginine 266.

Belongs to the radical SAM superfamily. Biotin synthase family. Homodimer. Requires [4Fe-4S] cluster as cofactor. [2Fe-2S] cluster serves as cofactor.

The enzyme catalyses (4R,5S)-dethiobiotin + (sulfur carrier)-SH + 2 reduced [2Fe-2S]-[ferredoxin] + 2 S-adenosyl-L-methionine = (sulfur carrier)-H + biotin + 2 5'-deoxyadenosine + 2 L-methionine + 2 oxidized [2Fe-2S]-[ferredoxin]. It functions in the pathway cofactor biosynthesis; biotin biosynthesis; biotin from 7,8-diaminononanoate: step 2/2. Its function is as follows. Catalyzes the conversion of dethiobiotin (DTB) to biotin by the insertion of a sulfur atom into dethiobiotin via a radical-based mechanism. In Ectopseudomonas mendocina (strain ymp) (Pseudomonas mendocina), this protein is Biotin synthase.